A 300-amino-acid chain; its full sequence is NADH-cytochrome b5 reductase 2 (300 aa).

Residues 12-29 traverse the membrane as a helical segment; the sequence is FVYPLVGATIGSIGLAYY. Positions 49–153 constitute an FAD-binding FR-type domain; it reads DQWIDLKLKK…KGPVVKWKWE (105 aa). 156–191 serves as a coordination point for FAD; it reads QFKSIALIGGGTGITPLYQLLREITSNPEDKTKVSL.

The protein belongs to the flavoprotein pyridine nucleotide cytochrome reductase family. FAD serves as cofactor.

It is found in the mitochondrion outer membrane. The enzyme catalyses 2 Fe(III)-[cytochrome b5] + NADH = 2 Fe(II)-[cytochrome b5] + NAD(+) + H(+). Its function is as follows. May mediate the reduction of outer membrane cytochrome b5. This Lodderomyces elongisporus (strain ATCC 11503 / CBS 2605 / JCM 1781 / NBRC 1676 / NRRL YB-4239) (Yeast) protein is NADH-cytochrome b5 reductase 2 (MCR1).